The sequence spans 54 residues: Small polypeptide DEVIL 12 (54 aa).

Residues 20-51 (NNKLTPNRSLKETRSRLYIIRRCLVMLLCWRE) are required for DVL/RTFL small polypeptide activity. N-linked (GlcNAc...) asparagine glycosylation is present at Asn26. Residues 31-48 (ETRSRLYIIRRCLVMLLC) form a helical membrane-spanning segment.

It belongs to the DVL/RTFL small polypeptides family.

It is found in the cell membrane. Functionally, small polypeptide acting as a regulatory molecule which coordinates cellular responses required for differentiation, growth and development, probably by restricting polar cell proliferation in lateral organs and coordinating socket cell recruitment and differentiation at trichome sites. This chain is Small polypeptide DEVIL 12, found in Arabidopsis thaliana (Mouse-ear cress).